Here is a 431-residue protein sequence, read N- to C-terminus: Serine--tRNA ligase (431 aa).

L-serine is bound at residue 237–239 (TAE). 268–270 (RSE) lines the ATP pocket. E291 contacts L-serine. ATP is bound at residue 355 to 358 (EISS). Residue S390 participates in L-serine binding.

The protein belongs to the class-II aminoacyl-tRNA synthetase family. Type-1 seryl-tRNA synthetase subfamily. As to quaternary structure, homodimer. The tRNA molecule binds across the dimer.

It is found in the cytoplasm. The catalysed reaction is tRNA(Ser) + L-serine + ATP = L-seryl-tRNA(Ser) + AMP + diphosphate + H(+). The enzyme catalyses tRNA(Sec) + L-serine + ATP = L-seryl-tRNA(Sec) + AMP + diphosphate + H(+). The protein operates within aminoacyl-tRNA biosynthesis; selenocysteinyl-tRNA(Sec) biosynthesis; L-seryl-tRNA(Sec) from L-serine and tRNA(Sec): step 1/1. Functionally, catalyzes the attachment of serine to tRNA(Ser). Is also able to aminoacylate tRNA(Sec) with serine, to form the misacylated tRNA L-seryl-tRNA(Sec), which will be further converted into selenocysteinyl-tRNA(Sec). The chain is Serine--tRNA ligase from Neisseria meningitidis serogroup C (strain 053442).